A 75-amino-acid polypeptide reads, in one-letter code: uncharacterized protein (75 aa).

Transmembrane regions (helical) follow at residues 7–26 and 36–58; these read LINA…AASA and MHLF…FCPV.

The protein resides in the cell membrane. This is an uncharacterized protein from Bacillus subtilis (strain 168).